A 288-amino-acid chain; its full sequence is Coiled-coil domain-containing protein 190 (288 aa).

The stretch at 16-69 forms a coiled coil; the sequence is LERKSARQAEARLSLRLQRLEIICLYHVKSLAREQRQLQKELQRLQQDIIKKRF. Residues 141 to 235 form a disordered region; it reads GERTSCFKEG…SSVDYAGSFK (95 aa). The segment covering 177 to 188 has biased composition (basic and acidic residues); that stretch reads HDQELSTNKTED. A compositionally biased stretch (polar residues) spans 203 to 213; the sequence is ANETRSENASQ.

This is Coiled-coil domain-containing protein 190 (Ccdc190) from Mus musculus (Mouse).